The chain runs to 257 residues: MKKLIIAGKEFNSRLFLGTGKFNSNTVMEEAILASGCEMVTVAMKRIELDDKEDDMLKHIIHPHIQLLPNTSGVRTAEEAVFAAQMAREAFGTNWLKLEIHPDPRYLLPDSTETLKATEELVKLGFVVLPYCQADPTLCKRLEEAGAATVMPLAAPIGTNKGLQTRDFLRIIIEQASVPVVVDAGIGAPSHATEAMEMGADACLVNTAIAVAGQPVEMAIAFKEAVIAGRRAYEAGLGAVGQNLIASASSPLTSFLD.

Catalysis depends on Lys-97, which acts as the Schiff-base intermediate with DXP. Residues Gly-158, 184–185 (AG), and 206–207 (NT) contribute to the 1-deoxy-D-xylulose 5-phosphate site.

Belongs to the ThiG family. As to quaternary structure, homotetramer. Forms heterodimers with either ThiH or ThiS.

It localises to the cytoplasm. It catalyses the reaction [ThiS sulfur-carrier protein]-C-terminal-Gly-aminoethanethioate + 2-iminoacetate + 1-deoxy-D-xylulose 5-phosphate = [ThiS sulfur-carrier protein]-C-terminal Gly-Gly + 2-[(2R,5Z)-2-carboxy-4-methylthiazol-5(2H)-ylidene]ethyl phosphate + 2 H2O + H(+). It functions in the pathway cofactor biosynthesis; thiamine diphosphate biosynthesis. Catalyzes the rearrangement of 1-deoxy-D-xylulose 5-phosphate (DXP) to produce the thiazole phosphate moiety of thiamine. Sulfur is provided by the thiocarboxylate moiety of the carrier protein ThiS. In vitro, sulfur can be provided by H(2)S. This is Thiazole synthase from Phocaeicola vulgatus (strain ATCC 8482 / DSM 1447 / JCM 5826 / CCUG 4940 / NBRC 14291 / NCTC 11154) (Bacteroides vulgatus).